Consider the following 156-residue polypeptide: Small ribosomal subunit protein uS7 (156 aa).

The protein belongs to the universal ribosomal protein uS7 family. As to quaternary structure, part of the 30S ribosomal subunit. Contacts proteins S9 and S11.

One of the primary rRNA binding proteins, it binds directly to 16S rRNA where it nucleates assembly of the head domain of the 30S subunit. Is located at the subunit interface close to the decoding center, probably blocks exit of the E-site tRNA. This chain is Small ribosomal subunit protein uS7, found in Rhizobium johnstonii (strain DSM 114642 / LMG 32736 / 3841) (Rhizobium leguminosarum bv. viciae).